A 218-amino-acid polypeptide reads, in one-letter code: Response regulator UvrY (218 aa).

In terms of domain architecture, Response regulatory spans 3-119; the sequence is NVLLVDDHEL…EVVSAIRSVY (117 aa). Asp54 carries the 4-aspartylphosphate modification. The HTH luxR-type domain maps to 143-208; that stretch reads TESPFASLSE…ELTHLAIRHG (66 aa). Residues 167–186 constitute a DNA-binding region (H-T-H motif); the sequence is VNEISEQLNLSPKTVNSYRY.

Phosphorylated and activated by BarA.

The protein resides in the cytoplasm. Functionally, member of the two-component regulatory system UvrY/BarA involved in the regulation of carbon metabolism via the CsrA/CsrB regulatory system. UvrY activates the transcription of the untranslated csrB RNA and of barA, in an autoregulatory loop. Mediates the effects of CsrA on csrB RNA by BarA-dependent and BarA-independent mechanisms. This Escherichia coli (strain K12) protein is Response regulator UvrY (uvrY).